Consider the following 650-residue polypeptide: Solute carrier family 23 member 2 (650 aa).

The segment covering 1-20 (MMGIGKNTTSKSMEAGSSTE) has biased composition (polar residues). The interval 1 to 21 (MMGIGKNTTSKSMEAGSSTEG) is disordered. The Cytoplasmic portion of the chain corresponds to 9–110 (TSKSMEAGSS…LCIFLGLQHY (102 aa)). At S70 the chain carries Phosphoserine. T75 bears the Phosphothreonine mark. S78 is modified (phosphoserine). T79 is subject to Phosphothreonine. At S81 the chain carries Phosphoserine. Residues 111–131 (LTCFSGTIAVPFLLADAMCVG) traverse the membrane as a helical segment. Topologically, residues 132-139 (YDQWATSQ) are extracellular. A helical membrane pass occupies residues 140-160 (LIGTIFFCVGITTLLQTTFGC). Residue R161 is a topological domain, cytoplasmic. A helical membrane pass occupies residues 162–182 (LPLFQASAFAFLAPARAILSL). Topologically, residues 183–218 (DKWKCNTTDVSVANGTAELLHTEHIWYPRIREIQGA) are extracellular. Residues N188 and N196 are each glycosylated (N-linked (GlcNAc...) asparagine). A helical transmembrane segment spans residues 219–239 (IIMSSLIEVVIGLLGLPGALL). The Cytoplasmic portion of the chain corresponds to 240 to 266 (KYIGPLTITPTVALIGLSGFQAAGERA). Residues 267–284 (GKHWGIAMLTIFLVLLFS) traverse the membrane as a helical segment. The Extracellular portion of the chain corresponds to 285–288 (QYAR). The segment at residues 289–302 (NVKFPLPIYKSKKG) is an intramembrane region (helical). The Extracellular segment spans residues 303–309 (WTAYKLQ). The chain crosses the membrane as a helical span at residues 310 to 330 (LFKMFPIILAILVSWLLCFIF). The Cytoplasmic portion of the chain corresponds to 331 to 371 (TVTDVFPPDSTKYGFYARTDARQGVLLVAPWFKVPYPFQWG). A helical membrane pass occupies residues 372–392 (LPTVSAAGVIGMLSAVVASII). Topologically, residues 393-417 (ESIGDYYACARLSCAPPPPIHAINR) are extracellular. A helical transmembrane segment spans residues 418-438 (GIFVEGLSCVLDGIFGTGNGS). Topologically, residues 439–461 (TSSSPNIGVLGITKVGSRRVIQC) are cytoplasmic. Residues 462-482 (GAALMLALGMIGKFSALFASL) form a helical membrane-spanning segment. At 483–485 (PDP) the chain is on the extracellular side. A helical transmembrane segment spans residues 486-506 (VLGALFCTLFGMITAVGLSNL). Topologically, residues 507 to 516 (QFIDLNSSRN) are cytoplasmic. Residues 517-537 (LFVLGFSIFFGLVLPSYLRQN) form a helical membrane-spanning segment. Residues 538–547 (PLVTGITGID) lie on the Extracellular side of the membrane. Residues 548 to 568 (QVLNVLLTTAMFVGGCVAFIL) form a helical membrane-spanning segment. Residues 569 to 650 (DNTIPGTPEE…SSDEDSQATG (82 aa)) lie on the Cytoplasmic side of the membrane. T649 carries the phosphothreonine modification.

It belongs to the nucleobase:cation symporter-2 (NCS2) (TC 2.A.40) family. As to quaternary structure, interacts with CLSTN3. Phosphorylated. In terms of tissue distribution, ubiquitous.

It localises to the cell membrane. It catalyses the reaction L-ascorbate(out) + 2 Na(+)(out) = L-ascorbate(in) + 2 Na(+)(in). Its function is as follows. Sodium/ascorbate cotransporter. Mediates electrogenic uptake of vitamin C, with a stoichiometry of 2 Na(+) for each ascorbate. The chain is Solute carrier family 23 member 2 (SLC23A2) from Homo sapiens (Human).